The primary structure comprises 245 residues: DNA polymerase sliding clamp 1 (245 aa).

The protein belongs to the PCNA family. As to quaternary structure, homotrimer. The subunits circularize to form a toroid; DNA passes through its center. Replication factor C (RFC) is required to load the toroid on the DNA.

Sliding clamp subunit that acts as a moving platform for DNA processing. Responsible for tethering the catalytic subunit of DNA polymerase and other proteins to DNA during high-speed replication. The polypeptide is DNA polymerase sliding clamp 1 (Sulfurisphaera ohwakuensis).